We begin with the raw amino-acid sequence, 178 residues long: Ribose 1,5-bisphosphate phosphokinase PhnN (178 aa).

ATP is bound at residue 9-16 (GPSGSGKD).

Belongs to the ribose 1,5-bisphosphokinase family.

It carries out the reaction alpha-D-ribose 1,5-bisphosphate + ATP = 5-phospho-alpha-D-ribose 1-diphosphate + ADP. The protein operates within metabolic intermediate biosynthesis; 5-phospho-alpha-D-ribose 1-diphosphate biosynthesis; 5-phospho-alpha-D-ribose 1-diphosphate from D-ribose 5-phosphate (route II): step 3/3. Its function is as follows. Catalyzes the phosphorylation of ribose 1,5-bisphosphate to 5-phospho-D-ribosyl alpha-1-diphosphate (PRPP). This is Ribose 1,5-bisphosphate phosphokinase PhnN from Pantoea vagans (strain C9-1) (Pantoea agglomerans (strain C9-1)).